Reading from the N-terminus, the 232-residue chain is Zinc finger protein RTS2 (232 aa).

The segment at 24 to 48 adopts a C2H2-type zinc-finger fold; it reads YYCQICQRQCKDANGFQSHNKSPSH. Disordered stretches follow at residues 180–199 and 211–232; these read AKRQ…ISGD and GNGR…IKFR.

Its subcellular location is the nucleus. This is Zinc finger protein RTS2 (RTS2) from Saccharomyces cerevisiae (strain ATCC 204508 / S288c) (Baker's yeast).